A 195-amino-acid polypeptide reads, in one-letter code: Segregation and condensation protein B (195 aa).

Residues 169–195 (LEDVAASQENSREAGGRGSIPGHPGEE) form a disordered region.

Belongs to the ScpB family. Homodimer. Homodimerization may be required to stabilize the binding of ScpA to the Smc head domains. Component of a cohesin-like complex composed of ScpA, ScpB and the Smc homodimer, in which ScpA and ScpB bind to the head domain of Smc. The presence of the three proteins is required for the association of the complex with DNA.

Its subcellular location is the cytoplasm. Its function is as follows. Participates in chromosomal partition during cell division. May act via the formation of a condensin-like complex containing Smc and ScpA that pull DNA away from mid-cell into both cell halves. The sequence is that of Segregation and condensation protein B from Moorella thermoacetica (strain ATCC 39073 / JCM 9320).